A 379-amino-acid chain; its full sequence is 23S rRNA (uracil(747)-C(5))-methyltransferase RlmC (379 aa).

Cysteine 3, cysteine 11, cysteine 14, and cysteine 86 together coordinate [4Fe-4S] cluster. The S-adenosyl-L-methionine site is built by glutamine 211, phenylalanine 240, glutamate 262, and asparagine 310. The active-site Nucleophile is the cysteine 337.

It belongs to the class I-like SAM-binding methyltransferase superfamily. RNA M5U methyltransferase family. RlmC subfamily.

The enzyme catalyses uridine(747) in 23S rRNA + S-adenosyl-L-methionine = 5-methyluridine(747) in 23S rRNA + S-adenosyl-L-homocysteine + H(+). Functionally, catalyzes the formation of 5-methyl-uridine at position 747 (m5U747) in 23S rRNA. The chain is 23S rRNA (uracil(747)-C(5))-methyltransferase RlmC from Halothiobacillus neapolitanus (strain ATCC 23641 / c2) (Thiobacillus neapolitanus).